Reading from the N-terminus, the 542-residue chain is Carboxypeptidase Y homolog A (542 aa).

The N-terminal stretch at 1-17 is a signal peptide; sequence MRVLPATLLVGAASAAV. A propeptide spanning residues 18–123 is cleaved from the precursor; it reads PPLQQVLGRP…KLEAYDLRIK (106 aa). 5 disulfides stabilise this stretch: Cys-178-Cys-418, Cys-312-Cys-326, Cys-336-Cys-359, Cys-343-Cys-352, and Cys-381-Cys-388. The N-linked (GlcNAc...) asparagine glycan is linked to Asn-209. Ser-265 is a catalytic residue. The active site involves Asp-457. Asn-508 carries an N-linked (GlcNAc...) asparagine glycan. The active site involves His-519.

It belongs to the peptidase S10 family.

The protein localises to the vacuole. The enzyme catalyses Release of a C-terminal amino acid with broad specificity.. Vacuolar carboxypeptidase involved in degradation of small peptides. Digests preferentially peptides containing an aliphatic or hydrophobic residue in P1' position, as well as methionine, leucine or phenylalanine in P1 position of ester substrate. The sequence is that of Carboxypeptidase Y homolog A (cpyA) from Aspergillus oryzae (strain ATCC 42149 / RIB 40) (Yellow koji mold).